Here is a 360-residue protein sequence, read N- to C-terminus: Alanine racemase (360 aa).

The active-site Proton acceptor; specific for D-alanine is the K34. Position 34 is an N6-(pyridoxal phosphate)lysine (K34). R129 contributes to the substrate binding site. Y254 serves as the catalytic Proton acceptor; specific for L-alanine. M302 provides a ligand contact to substrate.

This sequence belongs to the alanine racemase family. Pyridoxal 5'-phosphate serves as cofactor.

It catalyses the reaction L-alanine = D-alanine. It functions in the pathway amino-acid biosynthesis; D-alanine biosynthesis; D-alanine from L-alanine: step 1/1. Functionally, catalyzes the interconversion of L-alanine and D-alanine. May also act on other amino acids. The sequence is that of Alanine racemase (alr) from Pectobacterium atrosepticum (strain SCRI 1043 / ATCC BAA-672) (Erwinia carotovora subsp. atroseptica).